A 452-amino-acid polypeptide reads, in one-letter code: Membrane-bound lytic murein transglycosylase D (452 aa).

The first 15 residues, 1–15, serve as a signal peptide directing secretion; sequence MKAKAILLASVLLVG. A lipid anchor (N-palmitoyl cysteine) is attached at Cys-16. Cys-16 is lipidated: S-diacylglycerol cysteine. A slt-type domain region spans residues 113–198; sequence NMPMELVLLP…LLTVAAYNSG (86 aa). Glu-125 is a catalytic residue. LysM domains follow at residues 341-384 and 400-448; these read RVYT…SLTI and ITYR…KNNN.

The protein belongs to the transglycosylase Slt family.

Its subcellular location is the cell membrane. The enzyme catalyses Exolytic cleavage of the (1-&gt;4)-beta-glycosidic linkage between N-acetylmuramic acid (MurNAc) and N-acetylglucosamine (GlcNAc) residues in peptidoglycan, from either the reducing or the non-reducing ends of the peptidoglycan chains, with concomitant formation of a 1,6-anhydrobond in the MurNAc residue.. Its function is as follows. Murein-degrading enzyme. May play a role in recycling of muropeptides during cell elongation and/or cell division. The polypeptide is Membrane-bound lytic murein transglycosylase D (mltD) (Escherichia coli O6:H1 (strain CFT073 / ATCC 700928 / UPEC)).